A 542-amino-acid chain; its full sequence is Cytochrome P450 monooxygenase 91 (542 aa).

The N-terminal stretch at 1 to 22 (MLDILRFVLICGILWILRRVLL) is a signal peptide. N-linked (GlcNAc...) asparagine glycosylation is found at asparagine 299 and asparagine 392. Heme is bound at residue cysteine 482.

Belongs to the cytochrome P450 family. It depends on heme as a cofactor.

It functions in the pathway secondary metabolite biosynthesis. Cytochrome P450 monooxygenase that is able to use dehydroabietic acid as a substrate for oxidation. This Postia placenta (strain ATCC 44394 / Madison 698-R) (Brown rot fungus) protein is Cytochrome P450 monooxygenase 91.